We begin with the raw amino-acid sequence, 98 residues long: Co-chaperonin GroES (98 aa).

The interval 35-57 (EKPQEGKVISAGPGRVDDKGTRV) is disordered.

This sequence belongs to the GroES chaperonin family. Heptamer of 7 subunits arranged in a ring. Interacts with the chaperonin GroEL.

The protein resides in the cytoplasm. Functionally, together with the chaperonin GroEL, plays an essential role in assisting protein folding. The GroEL-GroES system forms a nano-cage that allows encapsulation of the non-native substrate proteins and provides a physical environment optimized to promote and accelerate protein folding. GroES binds to the apical surface of the GroEL ring, thereby capping the opening of the GroEL channel. The polypeptide is Co-chaperonin GroES (Cutibacterium acnes (strain DSM 16379 / KPA171202) (Propionibacterium acnes)).